The sequence spans 2324 residues: Myomegalin (2324 aa).

Coiled coils occupy residues 41 to 132 (REDV…LVEA), 158 to 205 (QVKL…LLEE), 238 to 288 (DSHL…SLKE), and 348 to 638 (LFCS…NKQA). Disordered regions lie at residues 72–96 (TWAD…EPQQ) and 205–240 (EPGG…SDSH). Residues 85 to 96 (AELRRQVEEPQQ) show a composition bias toward basic and acidic residues. A compositionally biased stretch (polar residues) spans 219 to 238 (PTQQKPDLNETPTTQPSVSD). Positions 701–747 (PAGATSVGPHHGEQTDQGSTQMPSRDDSTSLTAREEASIPRSTLGDS) are disordered. T705 carries the post-translational modification Phosphothreonine. Positions 724 to 738 (SRDDSTSLTAREEAS) are enriched in basic and acidic residues. Coiled-coil stretches lie at residues 745–822 (GDSD…QLVD), 855–923 (ENRR…EEVL), and 1011–1043 (LRAE…GFSS). 2 disordered regions span residues 1155-1182 (LPSS…SLKL) and 1195-1216 (NKSQ…STKH). Coiled-coil stretches lie at residues 1213–1241 (STKH…SEAT), 1346–1384 (TSDD…LSAT), and 1430–1455 (GLQA…PKTG). 6 disordered regions span residues 1540–1559 (TDRL…KEEA), 1589–1610 (RFSS…SSTS), 1628–1685 (YTHY…IPKP), 1742–1773 (APPT…SPAR), 1857–1877 (LSST…GLES), and 2081–2140 (NQQP…TPPK). The Olduvai domain occupies 1550-1641 (KDHKSEKEEA…EEKKPSPSNS (92 aa)). Composition is skewed to low complexity over residues 1591–1610 (SSPP…SSTS) and 1637–1646 (SPSNSAASAS). The segment covering 1743–1767 (PPTSTSTLLSNHTEASSPRYSNPAQ) has biased composition (polar residues). Positions 1821-2056 (GADLLEEHLG…LRLQLEQQMD (236 aa)) form a coiled coil. Composition is skewed to polar residues over residues 2081–2090 (NQQPPFQGSA) and 2108–2135 (PSNS…SAAT). Residues 2248 to 2274 (EEGNLMEKELLDLRAQVSQQQQLLQST) are a coiled coil.

In terms of assembly, interacts with PDE4D. May interact with MAPRE1 and MAPRE3. May form a pericentrosomal complex with AKAP9, CDK5RAP2 and EB1/MAPRE1 in an isoform-specific manner; within this complex, may mediate MAPRE1-binding to CDK5RAP2. Interaction with AKAP9 stabilizes both proteins. May interact with CAMSAP2 in an isoform-specific manner; this interaction is much stronger in the presence of AKAP9. In complex with AKAP9, recruits CAMSAP2 to the Golgi apparatus. May interact with unglycosylated LGALS3BP in an isoform-specific manner; this interaction may connect the pericentrosomal complex to the gamma-tubulin ring complex (gamma-TuRC) to promote microtubule assembly and acetylation. In terms of tissue distribution, abundantly expressed in heart and skeletal muscle and to a lower extent in brain, lung and liver. Expressed in heart, skeletal muscle and testis (at protein level).

Its subcellular location is the cytoplasm. It localises to the cytoskeleton. It is found in the microtubule organizing center. The protein resides in the centrosome. The protein localises to the golgi apparatus. Its function is as follows. Functions as an anchor sequestering components of the cAMP-dependent pathway to Golgi and/or centrosomes. May participate in microtubule dynamics, promoting microtubule assembly, in an isoform-specific manner. Depending upon the cell context, may act at the level of the Golgi apparatus or that of the centrosome. In complex with AKAP9, recruits CAMSAP2 to the Golgi apparatus and tethers non-centrosomal minus-end microtubules to the Golgi, an important step for polarized cell movement. In complex with AKAP9, EB1/MAPRE1 and CDK5RAP2, contributes to microtubules nucleation and extension from the centrosome to the cell periphery, a crucial process for directed cell migration, mitotic spindle orientation and cell-cycle progression. This is Myomegalin (Pde4dip) from Rattus norvegicus (Rat).